A 431-amino-acid chain; its full sequence is GTPase Obg (431 aa).

One can recognise an Obg domain in the interval 1–158 (MFVDQVKVDV…LTIRMELKVL (158 aa)). Positions 159 to 335 (ADVGLVGFPS…LLAKTADLLD (177 aa)) constitute an OBG-type G domain. GTP is bound by residues 165-172 (GFPSVGKS), 190-194 (FTTLV), 212-215 (DLPG), 282-285 (TKMD), and 316-318 (SSI). Residues serine 172 and threonine 192 each contribute to the Mg(2+) site. Positions 353-431 (YTTEADADFS…ILDYSFQFMD (79 aa)) constitute an OCT domain.

The protein belongs to the TRAFAC class OBG-HflX-like GTPase superfamily. OBG GTPase family. In terms of assembly, monomer. It depends on Mg(2+) as a cofactor.

Its subcellular location is the cytoplasm. Functionally, an essential GTPase which binds GTP, GDP and possibly (p)ppGpp with moderate affinity, with high nucleotide exchange rates and a fairly low GTP hydrolysis rate. Plays a role in control of the cell cycle, stress response, ribosome biogenesis and in those bacteria that undergo differentiation, in morphogenesis control. The protein is GTPase Obg of Lactiplantibacillus plantarum (strain ATCC BAA-793 / NCIMB 8826 / WCFS1) (Lactobacillus plantarum).